The chain runs to 471 residues: Cytochrome P450 monooxygenase afvE (471 aa).

The helical transmembrane segment at 265 to 285 threads the bilayer; it reads IIFYHFELSTPVAFFIIFAVY. Residue Cys410 participates in heme binding.

The protein belongs to the cytochrome P450 family. Requires heme as cofactor.

It localises to the membrane. The protein operates within secondary metabolite biosynthesis. In terms of biological role, cytochrome P450 monooxygenase; part of the gene cluster that mediates the biosynthesis of aflavarin, a bicoumarin that exhibits anti-insectan activity against the fungivorous beetle C.hemipterus. This Aspergillus flavus (strain ATCC 200026 / FGSC A1120 / IAM 13836 / NRRL 3357 / JCM 12722 / SRRC 167) protein is Cytochrome P450 monooxygenase afvE.